The chain runs to 142 residues: Hemoglobin subunit alpha-1 (142 aa).

In terms of domain architecture, Globin spans 2-142; it reads LLSADDKKHI…VSTVLTSKYR (141 aa). H59 provides a ligand contact to O2. Residue H88 coordinates heme b.

It belongs to the globin family. Heterotetramer of two alpha chains and two beta chains. In terms of tissue distribution, red blood cells.

Functionally, involved in oxygen transport from the lung to the various peripheral tissues. The sequence is that of Hemoglobin subunit alpha-1 (hba1) from Xenopus laevis (African clawed frog).